The following is a 335-amino-acid chain: Tetraacyldisaccharide 4'-kinase (335 aa).

58-65 contacts ATP; that stretch reads TVGGSGKT.

Belongs to the LpxK family.

It carries out the reaction a lipid A disaccharide + ATP = a lipid IVA + ADP + H(+). It participates in glycolipid biosynthesis; lipid IV(A) biosynthesis; lipid IV(A) from (3R)-3-hydroxytetradecanoyl-[acyl-carrier-protein] and UDP-N-acetyl-alpha-D-glucosamine: step 6/6. Functionally, transfers the gamma-phosphate of ATP to the 4'-position of a tetraacyldisaccharide 1-phosphate intermediate (termed DS-1-P) to form tetraacyldisaccharide 1,4'-bis-phosphate (lipid IVA). The sequence is that of Tetraacyldisaccharide 4'-kinase from Shewanella oneidensis (strain ATCC 700550 / JCM 31522 / CIP 106686 / LMG 19005 / NCIMB 14063 / MR-1).